We begin with the raw amino-acid sequence, 795 residues long: Phenylalanine--tRNA ligase beta subunit (795 aa).

The 110-residue stretch at 39–148 (AGSFHGVVVG…ADAPIGTDIR (110 aa)) folds into the tRNA-binding domain. Positions 401–476 (PKRATITLRR…RVYGYNNIPD (76 aa)) constitute a B5 domain. 4 residues coordinate Mg(2+): aspartate 454, aspartate 460, glutamate 463, and glutamate 464. In terms of domain architecture, FDX-ACB spans 701-794 (SRFPANRRDI…LKERFQASLR (94 aa)).

Belongs to the phenylalanyl-tRNA synthetase beta subunit family. Type 1 subfamily. In terms of assembly, tetramer of two alpha and two beta subunits. The cofactor is Mg(2+).

It is found in the cytoplasm. It catalyses the reaction tRNA(Phe) + L-phenylalanine + ATP = L-phenylalanyl-tRNA(Phe) + AMP + diphosphate + H(+). The chain is Phenylalanine--tRNA ligase beta subunit (pheT) from Escherichia coli (strain K12).